Here is a 63-residue protein sequence, read N- to C-terminus: Large ribosomal subunit protein uL29 (63 aa).

It belongs to the universal ribosomal protein uL29 family.

The chain is Large ribosomal subunit protein uL29 from Psychromonas ingrahamii (strain DSM 17664 / CCUG 51855 / 37).